The sequence spans 592 residues: Endoribonuclease Arlr (592 aa).

The N-terminal stretch at 1–24 (MRCLALSAVFLCLTLAGHFHLSDA) is a signal peptide. Residues 83–329 (PTAANKPPPL…FQSSGNSVAT (247 aa)) are disordered. The span at 109-120 (PGSSPFGASQNP) shows a compositional bias: polar residues. Low complexity-rich tracts occupy residues 134–144 (PSHPSQPSQPS) and 188–209 (GISSTTSTTTTAKPITSTTGKT). 2 stretches are compositionally biased toward pro residues: residues 234 to 249 (LPAPKTPPGSPTPTPG) and 258 to 267 (LPTPQHPVHP). A compositionally biased stretch (low complexity) spans 268–294 (PTKATSAATPTPTPTPSFSSSVTPTPA). An EndoU domain is found at 329–592 (TDDEIRQLTE…NLIGSAYPEI (264 aa)). Catalysis depends on residues His-473, His-488, and Lys-531.

Belongs to the ENDOU family. Monomer. It depends on Mn(2+) as a cofactor. In terms of tissue distribution, predominantly expressed in head. Expressed in fat body cells.

Its subcellular location is the endoplasmic reticulum lumen. The protein resides in the secreted. The catalysed reaction is a ribonucleotidyl-ribonucleotide-RNA + H2O = a 3'-end 3'-phospho-ribonucleotide-RNA + a 5'-end dephospho-ribonucleoside-RNA + H(+). In terms of biological role, endoribonuclease that cleaves single-stranded RNAs; unlike its paralog EndoU it does not appear to preferentially cleave at uridylates and releases linear products instead of products that have 2'-3'-cyclic phosphate termini. Preferentially cleaves single stranded RNA at sites with AU, UC and poly-U sites cleaved less efficiently. Targets mRNAs encoding proteins involved in lipid metabolism, particularly those involved in lipolysis, to regulate their expression. The protein is Endoribonuclease Arlr of Drosophila melanogaster (Fruit fly).